Reading from the N-terminus, the 232-residue chain is H-2 class II histocompatibility antigen, E-S beta chain (232 aa).

Positions 1–90 (WFLEYSTSEC…LDKFLVPRRV (90 aa)) are beta-1. At 1-193 (WFLEYSTSEC…KAQSTSAQNK (193 aa)) the chain is on the extracellular side. Disulfide bonds link C10–C74 and C112–C168. N-linked (GlcNAc...) asparagine glycosylation occurs at N14. The tract at residues 91 to 193 (EPTVTVYPTK…KAQSTSAQNK (103 aa)) is beta-2. Residues 92-182 (PTVTVYPTKT…PSLTDPVTVE (91 aa)) form the Ig-like C1-type domain. Residues 194–216 (MLSGVGGFVLGLLFLGAGLFIYF) traverse the membrane as a helical segment. Residues 217–232 (RNQKGQSGLQPTGLLS) are Cytoplasmic-facing.

Belongs to the MHC class II family. Ubiquitinated in immature dendritic cells leading to down-regulation of MHC class II.

Its subcellular location is the membrane. The sequence is that of H-2 class II histocompatibility antigen, E-S beta chain (H2-Eb1) from Mus musculus (Mouse).